Consider the following 319-residue polypeptide: Sphingomyelinase D (319 aa).

An N-terminal signal peptide occupies residues 1–23; the sequence is MTPLLRTICAILCILIAVPLTFA. His44 is an active-site residue. The Mg(2+) site is built by Glu64, Asp66, and Asp109. An SMD-tail motif is present at residues 312–319; it reads ATGADKPW.

It belongs to the sphingomyelinase D/phospholipase D family. It depends on Mg(2+) as a cofactor.

The protein localises to the secreted. The enzyme catalyses a sphingomyelin + H2O = an N-acylsphing-4-enine 1-phosphate + choline + H(+). In terms of biological role, catalyzes the hydrolysis of sphingomyelin. Sphingomyelinases D are produced by some spider in their venoms, but also by arthropods such as ticks, or pathogenic bacteria and fungi. They might play a role in pathogenicity through different mechanisms, such as membrane destabilization and host cell penetration, but also pulmonary inflammation and cutaneous lesions. The polypeptide is Sphingomyelinase D (Ajellomyces capsulatus (strain G186AR / H82 / ATCC MYA-2454 / RMSCC 2432) (Darling's disease fungus)).